A 276-amino-acid chain; its full sequence is Formamidopyrimidine-DNA glycosylase (276 aa).

The Schiff-base intermediate with DNA role is filled by P2. Catalysis depends on E3, which acts as the Proton donor. The active-site Proton donor; for beta-elimination activity is K59. 3 residues coordinate DNA: H92, R111, and K155. The segment at 239 to 273 adopts an FPG-type zinc-finger fold; it reads AVYGQTGAPCPRCGTAIEKIKVGGRGTHFCPTCQQ. R263 serves as the catalytic Proton donor; for delta-elimination activity.

Belongs to the FPG family. In terms of assembly, monomer. The cofactor is Zn(2+).

The enzyme catalyses Hydrolysis of DNA containing ring-opened 7-methylguanine residues, releasing 2,6-diamino-4-hydroxy-5-(N-methyl)formamidopyrimidine.. The catalysed reaction is 2'-deoxyribonucleotide-(2'-deoxyribose 5'-phosphate)-2'-deoxyribonucleotide-DNA = a 3'-end 2'-deoxyribonucleotide-(2,3-dehydro-2,3-deoxyribose 5'-phosphate)-DNA + a 5'-end 5'-phospho-2'-deoxyribonucleoside-DNA + H(+). Its function is as follows. Involved in base excision repair of DNA damaged by oxidation or by mutagenic agents. Acts as a DNA glycosylase that recognizes and removes damaged bases. Has a preference for oxidized purines, such as 7,8-dihydro-8-oxoguanine (8-oxoG). Has AP (apurinic/apyrimidinic) lyase activity and introduces nicks in the DNA strand. Cleaves the DNA backbone by beta-delta elimination to generate a single-strand break at the site of the removed base with both 3'- and 5'-phosphates. This chain is Formamidopyrimidine-DNA glycosylase, found in Exiguobacterium sibiricum (strain DSM 17290 / CCUG 55495 / CIP 109462 / JCM 13490 / 255-15).